Consider the following 928-residue polypeptide: Protein NETWORKED 2B (928 aa).

One can recognise an NAB domain in the interval 10–90 (YSWWWASHIR…ERYDHLSTEL (81 aa)). Positions 108–144 (PLVDDDDDDDDDNPKKPPKHLHLIPSGTNIPQVPEVP) are disordered. Acidic residues predominate over residues 110–119 (VDDDDDDDDD). Coiled-coil stretches lie at residues 207 to 309 (SYEQ…AKKA) and 360 to 445 (ALLK…VKMD). Disordered regions lie at residues 447 to 472 (DVEG…SISN) and 489 to 529 (KQSR…EERR). The span at 457–468 (DIQEEDTVEDSD) shows a compositional bias: acidic residues. Basic and acidic residues predominate over residues 489 to 506 (KQSRDQESMQEEKSETRD). Positions 547–574 (LLDEYSSVLRDYREVKRKLSEVEKKNRD) form a coiled coil. Residues 620-651 (AESVSISHSSNSSFSMPPLPQRGDLKRASEQE) form a disordered region. Residues 622–634 (SVSISHSSNSSFS) are compositionally biased toward low complexity. Over residues 642–651 (GDLKRASEQE) the composition is skewed to basic and acidic residues.

The protein belongs to the NET family.

In terms of biological role, plant-specific actin binding protein. May be part of a membrane-cytoskeletal adapter complex. The polypeptide is Protein NETWORKED 2B (Arabidopsis thaliana (Mouse-ear cress)).